The sequence spans 217 residues: MKIFLDTANLEEIKTAADWGVIDGVTTNPTLVAKENVPFEKRIKEICEIVKGPVSAEVTALNWNEMIEEAKKLAEIDKHVVIKIPMTKDGLKATKVLSEENIAVNMTLIFSSAQALLAMKAGARYVSPFVGRLDDISSDGMKLIEEIVQIIENYDFRAEIIVASVRHPMHIVHAALIGADIVTVPFKVLQSMFNHPLTDIGIDRFMKDWKDYQNRTK.

The active-site Schiff-base intermediate with substrate is the K83.

This sequence belongs to the transaldolase family. Type 3B subfamily.

The protein resides in the cytoplasm. The enzyme catalyses D-sedoheptulose 7-phosphate + D-glyceraldehyde 3-phosphate = D-erythrose 4-phosphate + beta-D-fructose 6-phosphate. It functions in the pathway carbohydrate degradation; pentose phosphate pathway; D-glyceraldehyde 3-phosphate and beta-D-fructose 6-phosphate from D-ribose 5-phosphate and D-xylulose 5-phosphate (non-oxidative stage): step 2/3. In terms of biological role, transaldolase is important for the balance of metabolites in the pentose-phosphate pathway. This Pseudothermotoga lettingae (strain ATCC BAA-301 / DSM 14385 / NBRC 107922 / TMO) (Thermotoga lettingae) protein is Probable transaldolase.